The primary structure comprises 273 residues: Shikimate dehydrogenase (NADP(+)) (273 aa).

Residues 19–21 (SQS) and threonine 66 contribute to the shikimate site. Residue lysine 70 is the Proton acceptor of the active site. Glutamate 82 contributes to the NADP(+) binding site. Shikimate contacts are provided by asparagine 91 and aspartate 107. NADP(+) is bound by residues 131–135 (GAGGA) and methionine 217. Tyrosine 219 is a binding site for shikimate. Residue glycine 241 participates in NADP(+) binding.

This sequence belongs to the shikimate dehydrogenase family. Homodimer.

It carries out the reaction shikimate + NADP(+) = 3-dehydroshikimate + NADPH + H(+). The protein operates within metabolic intermediate biosynthesis; chorismate biosynthesis; chorismate from D-erythrose 4-phosphate and phosphoenolpyruvate: step 4/7. Its function is as follows. Involved in the biosynthesis of the chorismate, which leads to the biosynthesis of aromatic amino acids. Catalyzes the reversible NADPH linked reduction of 3-dehydroshikimate (DHSA) to yield shikimate (SA). The polypeptide is Shikimate dehydrogenase (NADP(+)) (Buchnera aphidicola subsp. Schizaphis graminum (strain Sg)).